A 470-amino-acid chain; its full sequence is Probable G-protein coupled receptor 152 (470 aa).

Residues 1–25 form a disordered region; that stretch reads MDTTMEADLGATGHRPRTELDDEDS. Topologically, residues 1 to 33 are extracellular; the sequence is MDTTMEADLGATGHRPRTELDDEDSYPQGGWDT. A helical transmembrane segment spans residues 34–54; it reads VFLVALLLLGLPANGLMAWLA. Residues 55–65 lie on the Cytoplasmic side of the membrane; the sequence is GSQARHGAGTR. The chain crosses the membrane as a helical span at residues 66–86; the sequence is LALLLLSLALSDFLFLAAAAF. The Extracellular segment spans residues 87–105; sequence QILEIRHGGHWPLGTAACR. A disulfide bridge connects residues Cys-104 and Cys-182. Residues 106–126 form a helical membrane-spanning segment; it reads FYYFLWGVSYSSGLFLLAALS. Residues 127 to 148 are Cytoplasmic-facing; it reads LDRCLLALCPHWYPGHRPVRLP. The helical transmembrane segment at 149 to 169 threads the bilayer; sequence LWVCAGVWVLATLFSVPWLVF. The Extracellular portion of the chain corresponds to 170–194; the sequence is PEAAVWWYDLVICLDFWDSEELSLR. A helical transmembrane segment spans residues 195-215; the sequence is MLEVLGGFLPFLLLLVCHVLT. Over 216 to 257 the chain is Cytoplasmic; the sequence is QATACRTCHRQQQPAACRGFARVARTILSAYVVLRLPYQLAQ. Residues 258-278 form a helical membrane-spanning segment; it reads LLYLAFLWDVYSGYLLWEALV. Topologically, residues 279–281 are extracellular; the sequence is YSD. The helical transmembrane segment at 282–302 threads the bilayer; it reads YLILLNSCLSPFLCLMASADL. Over 303–470 the chain is Cytoplasmic; it reads RTLLRSVLSS…PEAAPGAGPT (168 aa). The tract at residues 322–470 is disordered; sequence PGSFTPTEPQ…PEAAPGAGPT (149 aa). 2 stretches are compositionally biased toward polar residues: residues 325–335 and 348–414; these read FTPTEPQTQLD and AQSQ…NVQT. Over residues 415–425 the composition is skewed to low complexity; the sequence is PAPAASSVPSP.

This sequence belongs to the G-protein coupled receptor 1 family.

The protein localises to the cell membrane. In terms of biological role, orphan receptor. The chain is Probable G-protein coupled receptor 152 (GPR152) from Homo sapiens (Human).